Here is a 206-residue protein sequence, read N- to C-terminus: uncharacterized protein (206 aa).

Its subcellular location is the plastid. It localises to the cyanelle. This is an uncharacterized protein from Cyanophora paradoxa.